Reading from the N-terminus, the 525-residue chain is GMP synthase [glutamine-hydrolyzing] (525 aa).

The Glutamine amidotransferase type-1 domain occupies 9–207 (RILILDFGSQ…VRDICQCEAL (199 aa)). Cys-86 functions as the Nucleophile in the catalytic mechanism. Catalysis depends on residues His-181 and Glu-183. The 193-residue stretch at 208 to 400 (WTPAKIIDDA…LGLPYDMLYR (193 aa)) folds into the GMPS ATP-PPase domain. 235 to 241 (SGGVDSS) serves as a coordination point for ATP.

As to quaternary structure, homodimer.

It catalyses the reaction XMP + L-glutamine + ATP + H2O = GMP + L-glutamate + AMP + diphosphate + 2 H(+). The protein operates within purine metabolism; GMP biosynthesis; GMP from XMP (L-Gln route): step 1/1. Its function is as follows. Catalyzes the synthesis of GMP from XMP. This Salmonella schwarzengrund (strain CVM19633) protein is GMP synthase [glutamine-hydrolyzing].